Here is a 297-residue protein sequence, read N- to C-terminus: Urease accessory protein UreD (297 aa).

Residues 1 to 18 (MNSSAASPPAVSPHAAPS) are compositionally biased toward low complexity. Disordered stretches follow at residues 1–20 (MNSS…PSRT) and 178–201 (VDQA…PRRR).

Belongs to the UreD family. UreD, UreF and UreG form a complex that acts as a GTP-hydrolysis-dependent molecular chaperone, activating the urease apoprotein by helping to assemble the nickel containing metallocenter of UreC. The UreE protein probably delivers the nickel.

The protein localises to the cytoplasm. Functionally, required for maturation of urease via the functional incorporation of the urease nickel metallocenter. This is Urease accessory protein UreD from Parafrankia sp. (strain EAN1pec).